The sequence spans 1332 residues: Aldehyde oxidase 1 (1332 aa).

The 2Fe-2S ferredoxin-type domain occupies 4–91 (STLYFYVNGR…GAAVTTVEGV (88 aa)). Positions 43, 48, 51, and 73 each coordinate [2Fe-2S] cluster. Residue Gln-112 coordinates Mo-molybdopterin. Cys-113, Cys-116, Cys-148, and Cys-150 together coordinate [2Fe-2S] cluster. Mo-molybdopterin is bound at residue Cys-150. One can recognise an FAD-binding PCMH-type domain in the interval 234 to 419 (FTGDRVTWIS…LSVTIPYSRK (186 aa)). Residues 262–269 (VVMGNTSV), Ala-343, Ser-352, His-356, Asp-365, and Leu-409 contribute to the FAD site. Residues 800-801 (AF), Met-1041, 1082-1085 (GSVV), Gln-1197, and Leu-1262 each bind Mo-molybdopterin. Residue Glu-1264 is the Proton acceptor; for azaheterocycle hydroxylase activity of the active site.

It belongs to the xanthine dehydrogenase family. In terms of assembly, homodimer. It depends on [2Fe-2S] cluster as a cofactor. FAD serves as cofactor. The cofactor is Mo-molybdopterin. As to expression, expressed in liver.

The protein localises to the cytoplasm. It catalyses the reaction an aldehyde + O2 + H2O = a carboxylate + H2O2 + H(+). It carries out the reaction retinal + O2 + H2O = retinoate + H2O2 + H(+). With respect to regulation, inhibited by menadione and isovanillin. Not inhibited by allopurinol, a xanthine dehydrogenase potent inhibitor. Its function is as follows. Oxidase with broad substrate specificity, oxidizing aromatic azaheterocycles, such as N1-methylnicotinamide, N-methylphthalazinium and phthalazine, as well as aldehydes, such as benzaldehyde, retinal, pyridoxal, and vanillin. Plays a key role in the metabolism of xenobiotics and drugs containing aromatic azaheterocyclic substituents. Participates in the bioactivation of prodrugs such as famciclovir, catalyzing the oxidation step from 6-deoxypenciclovir to penciclovir, which is a potent antiviral agent. Is probably involved in the regulation of reactive oxygen species homeostasis. May be a prominent source of superoxide generation via the one-electron reduction of molecular oxygen. May also catalyze nitric oxide (NO) production via the reduction of nitrite to NO with NADH or aldehyde as electron donor. May play a role in adipogenesis. The sequence is that of Aldehyde oxidase 1 from Cavia porcellus (Guinea pig).